The primary structure comprises 157 residues: Transcriptional repressor NrdR (157 aa).

A zinc finger lies at 3–34; that stretch reads CSNCQNKNTKVLDSRPIEEGRAIRRRRECERC. One can recognise an ATP-cone domain in the interval 49–139; the sequence is LIVVKKDGVR…VYRQFKDITV (91 aa).

It belongs to the NrdR family. Zn(2+) serves as cofactor.

In terms of biological role, negatively regulates transcription of bacterial ribonucleotide reductase nrd genes and operons by binding to NrdR-boxes. The protein is Transcriptional repressor NrdR of Oceanobacillus iheyensis (strain DSM 14371 / CIP 107618 / JCM 11309 / KCTC 3954 / HTE831).